The sequence spans 100 residues: Urease subunit gamma (100 aa).

The protein belongs to the urease gamma subunit family. In terms of assembly, heterotrimer of UreA (gamma), UreB (beta) and UreC (alpha) subunits. Three heterotrimers associate to form the active enzyme.

The protein resides in the cytoplasm. The catalysed reaction is urea + 2 H2O + H(+) = hydrogencarbonate + 2 NH4(+). It functions in the pathway nitrogen metabolism; urea degradation; CO(2) and NH(3) from urea (urease route): step 1/1. The protein is Urease subunit gamma of Acinetobacter baumannii (strain SDF).